A 325-amino-acid chain; its full sequence is Hydroxymethylglutaryl-CoA lyase, mitochondrial (325 aa).

The N-terminal 27 residues, 1-27 (MASVRKAFPRRLVGLTSLRAVSTSSMG), are a transit peptide targeting the mitochondrion. Residues 33 to 300 (VKIVEVGPRD…HTGVNLQKLL (268 aa)) form the Pyruvate carboxyltransferase domain. Arginine 41 provides a ligand contact to substrate. Aspartate 42 provides a ligand contact to a divalent metal cation. Position 48 is an N6-acetyllysine; alternate (lysine 48). An N6-succinyllysine; alternate modification is found at lysine 48. Position 111 is an N6-acetyllysine (lysine 111). N6-acetyllysine; alternate occurs at positions 137 and 179. Lysine 137 and lysine 179 each carry N6-succinyllysine; alternate. 2 residues coordinate a divalent metal cation: histidine 233 and histidine 235. Cysteine 266 is an active-site residue. Residue asparagine 275 participates in a divalent metal cation binding. The Microbody targeting signal signature appears at 323-325 (CKL). Lysine 324 carries the N6-acetyllysine modification.

The protein belongs to the HMG-CoA lyase family. In terms of assembly, homodimer; disulfide-linked. Can also form homotetramers.

It localises to the mitochondrion matrix. The protein localises to the peroxisome. The enzyme catalyses (3S)-3-hydroxy-3-methylglutaryl-CoA = acetoacetate + acetyl-CoA. Its pathway is metabolic intermediate metabolism; (S)-3-hydroxy-3-methylglutaryl-CoA degradation; acetoacetate from (S)-3-hydroxy-3-methylglutaryl-CoA: step 1/1. Functionally, mitochondrial 3-hydroxy-3-methylglutaryl-CoA lyase that catalyzes a cation-dependent cleavage of (S)-3-hydroxy-3-methylglutaryl-CoA into acetyl-CoA and acetoacetate, a key step in ketogenesis. Terminal step in leucine catabolism. Ketone bodies (beta-hydroxybutyrate, acetoacetate and acetone) are essential as an alternative source of energy to glucose, as lipid precursors and as regulators of metabolism. This is Hydroxymethylglutaryl-CoA lyase, mitochondrial (Hmgcl) from Mus musculus (Mouse).